A 543-amino-acid chain; its full sequence is uncharacterized protein (543 aa).

The PE domain occupies 1–93; it reads MSFVTAAPEM…GGAYSSAEAA (93 aa). Residues 194–214 are disordered; sequence GGAGGPGGPTDVPAGTGGAGG.

The protein belongs to the mycobacterial PE family. PGRS subfamily.

This is an uncharacterized protein from Mycobacterium tuberculosis (strain CDC 1551 / Oshkosh).